We begin with the raw amino-acid sequence, 898 residues long: Alanine--tRNA ligase (898 aa).

Zn(2+)-binding residues include histidine 582, histidine 586, cysteine 685, and histidine 689.

It belongs to the class-II aminoacyl-tRNA synthetase family. Zn(2+) is required as a cofactor.

Its subcellular location is the cytoplasm. The enzyme catalyses tRNA(Ala) + L-alanine + ATP = L-alanyl-tRNA(Ala) + AMP + diphosphate. Functionally, catalyzes the attachment of alanine to tRNA(Ala) in a two-step reaction: alanine is first activated by ATP to form Ala-AMP and then transferred to the acceptor end of tRNA(Ala). Also edits incorrectly charged Ser-tRNA(Ala) and Gly-tRNA(Ala) via its editing domain. In Mycolicibacterium gilvum (strain PYR-GCK) (Mycobacterium gilvum (strain PYR-GCK)), this protein is Alanine--tRNA ligase.